Consider the following 159-residue polypeptide: uncharacterized protein (159 aa).

A run of 2 helical transmembrane segments spans residues I59–Y79 and V91–C113.

Its subcellular location is the cell membrane. This is an uncharacterized protein from Treponema pallidum (strain Nichols).